We begin with the raw amino-acid sequence, 963 residues long: Kinesin-1 heavy chain (963 aa).

Ala2 bears the N-acetylalanine mark. One can recognise a Kinesin motor domain in the interval 8–325 (NIKVMCRFRP…LLFGQRAKTI (318 aa)). 85 to 92 (GQTSSGKT) serves as a coordination point for ATP. Lys213 participates in a covalent cross-link: Glycyl lysine isopeptide (Lys-Gly) (interchain with G-Cter in SUMO2). Residues 330 to 913 (CVNVELTAEQ…EAVRSKNMAR (584 aa)) are a coiled coil. The segment at 908 to 963 (SKNMARRGHSAQIAKPIRPGQHPAASPTHPGAVRGGGSFVQNNQPVGLRGGGGKQA) is disordered. Residues 915-963 (GHSAQIAKPIRPGQHPAASPTHPGAVRGGGSFVQNNQPVGLRGGGGKQA) are globular. Residues Ser933 and Ser945 each carry the phosphoserine modification. Arg956 is subject to Omega-N-methylarginine.

The protein belongs to the TRAFAC class myosin-kinesin ATPase superfamily. Kinesin family. Kinesin subfamily. In terms of assembly, oligomer composed of two heavy chains and two light chains. Interacts with GRIP1 and PPP1R42. Interacts with SYBU. Interacts with JAKMIP1. Interacts with PLEKHM2. Interacts with ECPAS. Interacts with ZFYVE27. Found in a complex with OGT, RHOT1, RHOT2 and TRAK1. Interacts with APP (via cytoplasmic domain). Expressed in the brain (at protein level). Expressed in the brain, liver, kidney, spleen, heart, lung and sciatic nerve.

Its subcellular location is the cytoplasm. The protein localises to the cytoskeleton. The protein resides in the cytolytic granule membrane. It localises to the lysosome membrane. Functionally, microtubule-dependent motor required for normal distribution of mitochondria and lysosomes. Can induce formation of neurite-like membrane protrusions in non-neuronal cells in a ZFYVE27-dependent manner. Regulates centrosome and nuclear positioning during mitotic entry. During the G2 phase of the cell cycle in a BICD2-dependent manner, antagonizes dynein function and drives the separation of nuclei and centrosomes. Required for anterograde axonal transportation of MAPK8IP3/JIP3 which is essential for MAPK8IP3/JIP3 function in axon elongation. Through binding with PLEKHM2 and ARL8B, directs lysosome movement toward microtubule plus ends. Involved in NK cell-mediated cytotoxicity. Drives the polarization of cytolytic granules and microtubule-organizing centers (MTOCs) toward the immune synapse between effector NK lymphocytes and target cells. This Rattus norvegicus (Rat) protein is Kinesin-1 heavy chain.